A 372-amino-acid polypeptide reads, in one-letter code: GDP-mannose 4,6 dehydratase (372 aa).

The segment at 1-20 (MAHAPARCPSARGSGDGEMG) is disordered. A2 is subject to N-acetylalanine. NADP(+) contacts are provided by residues 30–35 (GITGQD), 55–58 (RRSS), 86–87 (DL), 108–112 (LGAQS), and Y123. T155 is an active-site residue. Active-site nucleophile residues include E157 and Y179. The NADP(+) site is built by K183, H209, and R214. A Phosphotyrosine modification is found at Y323.

The protein belongs to the NAD(P)-dependent epimerase/dehydratase family. GDP-mannose 4,6-dehydratase subfamily. The cofactor is NADP(+). Highly expressed in pancreas and small intestine. Expressed in thymus, protstate, colon, heart, placenta, liver and kidney. Expressed at low levels in spleen, testis, brain and lung.

The catalysed reaction is GDP-alpha-D-mannose = GDP-4-dehydro-alpha-D-rhamnose + H2O. The protein operates within nucleotide-sugar biosynthesis; GDP-L-fucose biosynthesis via de novo pathway; GDP-L-fucose from GDP-alpha-D-mannose: step 1/2. With respect to regulation, inhibited by GDP-fucose. Functionally, catalyzes the conversion of GDP-D-mannose to GDP-4-dehydro-6-deoxy-D-mannose. This Homo sapiens (Human) protein is GDP-mannose 4,6 dehydratase.